The sequence spans 686 residues: Methionine--tRNA ligase (686 aa).

The 'HIGH' region signature appears at 13–23 (PYANGQIHIGH). The Zn(2+) site is built by cysteine 144, cysteine 147, cysteine 157, and cysteine 160. The 'KMSKS' region motif lies at 335-339 (KMSKS). ATP is bound at residue lysine 338. The tRNA-binding domain occupies 580–686 (DFAKVDLRVA…EGAVPGMRIG (107 aa)).

The protein belongs to the class-I aminoacyl-tRNA synthetase family. MetG type 1 subfamily. Homodimer. It depends on Zn(2+) as a cofactor.

The protein resides in the cytoplasm. It carries out the reaction tRNA(Met) + L-methionine + ATP = L-methionyl-tRNA(Met) + AMP + diphosphate. Is required not only for elongation of protein synthesis but also for the initiation of all mRNA translation through initiator tRNA(fMet) aminoacylation. The chain is Methionine--tRNA ligase from Cupriavidus necator (strain ATCC 17699 / DSM 428 / KCTC 22496 / NCIMB 10442 / H16 / Stanier 337) (Ralstonia eutropha).